The sequence spans 248 residues: Probable transcriptional regulatory protein RHOS4_22610 (248 aa).

Residues 1-21 (MAGHSKWANIQHRKGKQDKLR) form a disordered region.

The protein belongs to the TACO1 family.

The protein localises to the cytoplasm. This chain is Probable transcriptional regulatory protein RHOS4_22610, found in Cereibacter sphaeroides (strain ATCC 17023 / DSM 158 / JCM 6121 / CCUG 31486 / LMG 2827 / NBRC 12203 / NCIMB 8253 / ATH 2.4.1.) (Rhodobacter sphaeroides).